The sequence spans 128 residues: Azurin (128 aa).

Residues 1 to 128 (AECKVDVDST…SMMKGAVVLK (128 aa)) form the Plastocyanin-like domain. Cys3 and Cys26 are joined by a disulfide. Positions 46, 112, 117, and 121 each coordinate Cu cation.

Its subcellular location is the periplasm. Transfers electrons from cytochrome c551 to cytochrome oxidase. The sequence is that of Azurin from Pseudomonas chlororaphis (Pseudomonas aureofaciens).